We begin with the raw amino-acid sequence, 214 residues long: Thiamine-phosphate synthase (214 aa).

Residues 37–41 (QYREK) and N73 each bind 4-amino-2-methyl-5-(diphosphooxymethyl)pyrimidine. Positions 74 and 93 each coordinate Mg(2+). S112 contributes to the 4-amino-2-methyl-5-(diphosphooxymethyl)pyrimidine binding site. 139–141 (TIS) is a 2-[(2R,5Z)-2-carboxy-4-methylthiazol-5(2H)-ylidene]ethyl phosphate binding site. K142 is a binding site for 4-amino-2-methyl-5-(diphosphooxymethyl)pyrimidine. Residues G171 and 191–192 (IS) contribute to the 2-[(2R,5Z)-2-carboxy-4-methylthiazol-5(2H)-ylidene]ethyl phosphate site.

This sequence belongs to the thiamine-phosphate synthase family. Mg(2+) is required as a cofactor.

The enzyme catalyses 2-[(2R,5Z)-2-carboxy-4-methylthiazol-5(2H)-ylidene]ethyl phosphate + 4-amino-2-methyl-5-(diphosphooxymethyl)pyrimidine + 2 H(+) = thiamine phosphate + CO2 + diphosphate. It catalyses the reaction 2-(2-carboxy-4-methylthiazol-5-yl)ethyl phosphate + 4-amino-2-methyl-5-(diphosphooxymethyl)pyrimidine + 2 H(+) = thiamine phosphate + CO2 + diphosphate. It carries out the reaction 4-methyl-5-(2-phosphooxyethyl)-thiazole + 4-amino-2-methyl-5-(diphosphooxymethyl)pyrimidine + H(+) = thiamine phosphate + diphosphate. It participates in cofactor biosynthesis; thiamine diphosphate biosynthesis; thiamine phosphate from 4-amino-2-methyl-5-diphosphomethylpyrimidine and 4-methyl-5-(2-phosphoethyl)-thiazole: step 1/1. Its function is as follows. Condenses 4-methyl-5-(beta-hydroxyethyl)thiazole monophosphate (THZ-P) and 2-methyl-4-amino-5-hydroxymethyl pyrimidine pyrophosphate (HMP-PP) to form thiamine monophosphate (TMP). This Listeria innocua serovar 6a (strain ATCC BAA-680 / CLIP 11262) protein is Thiamine-phosphate synthase.